The sequence spans 132 residues: Small ribosomal subunit protein eS12 (132 aa).

The protein belongs to the eukaryotic ribosomal protein eS12 family.

Its subcellular location is the cytoplasm. The protein is Small ribosomal subunit protein eS12 (rps12) of Xenopus laevis (African clawed frog).